Consider the following 526-residue polypeptide: Inosine-5'-monophosphate dehydrogenase (526 aa).

CBS domains are found at residues 120–179 and 183–239; these read FIQD…EDPV and MATD…PLAS. Residues 276–278 and 326–328 contribute to the NAD(+) site; these read DSS and GMG. 2 residues coordinate K(+): glycine 328 and glycine 330. Residue serine 331 coordinates IMP. Position 333 (cysteine 333) interacts with K(+). Catalysis depends on cysteine 333, which acts as the Thioimidate intermediate. IMP-binding positions include 366 to 368 and 389 to 390; these read DGG and GS. Arginine 439 (proton acceptor) is an active-site residue. Glutamine 451 is a binding site for IMP. A K(+)-binding site is contributed by serine 506. The tract at residues 506 to 526 is disordered; sequence SAQTEGNVHGLHTHEKKLYSS. A compositionally biased stretch (basic and acidic residues) spans 517–526; it reads HTHEKKLYSS.

Belongs to the IMPDH/GMPR family. In terms of assembly, homotetramer. The cofactor is K(+).

It localises to the cytoplasm. It carries out the reaction IMP + NAD(+) + H2O = XMP + NADH + H(+). The protein operates within secondary metabolite biosynthesis; terpenoid biosynthesis. With respect to regulation, mycophenolic acid (MPA) is a non-competitive inhibitor that prevents formation of the closed enzyme conformation by binding to the same site as the amobile flap. In contrast, mizoribine monophosphate (MZP) is a competitive inhibitor that induces the closed conformation. MPA is a potent inhibitor of mammalian IMPDHs but a poor inhibitor of the bacterial enzymes. MZP is a more potent inhibitor of bacterial IMPDH. Catalyzes the conversion of inosine 5'-phosphate (IMP) to xanthosine 5'-phosphate (XMP), the first committed and rate-limiting step in the de novo synthesis of guanine nucleotides, and therefore plays an important role in the regulation of cell growth. Part of the gene cluster that mediates the biosynthesis of mycophenolic acid (MPA), the first isolated antibiotic natural product in the world. Does not play a role in the biosynthesis of MPA, but is involved in self resistance to MPA, since MPA acts as an inhibitor of IMP dehydrogenases. The polypeptide is Inosine-5'-monophosphate dehydrogenase (Penicillium roqueforti (strain FM164)).